Consider the following 152-residue polypeptide: Xanthine-guanine phosphoribosyltransferase (152 aa).

5-phospho-alpha-D-ribose 1-diphosphate is bound by residues 37-38 (RG), Arg69, and 88-96 (DDLVDSGDT). Arg69 is a binding site for GMP. Asp89 contacts Mg(2+). 2 residues coordinate guanine: Asp92 and Ile135. Positions 92 and 135 each coordinate xanthine. Residues 92-96 (DSGDT) and 134-135 (WI) contribute to the GMP site.

This sequence belongs to the purine/pyrimidine phosphoribosyltransferase family. XGPT subfamily. As to quaternary structure, homotetramer. The cofactor is Mg(2+).

It localises to the cell inner membrane. The enzyme catalyses GMP + diphosphate = guanine + 5-phospho-alpha-D-ribose 1-diphosphate. It carries out the reaction XMP + diphosphate = xanthine + 5-phospho-alpha-D-ribose 1-diphosphate. It catalyses the reaction IMP + diphosphate = hypoxanthine + 5-phospho-alpha-D-ribose 1-diphosphate. It functions in the pathway purine metabolism; GMP biosynthesis via salvage pathway; GMP from guanine: step 1/1. The protein operates within purine metabolism; XMP biosynthesis via salvage pathway; XMP from xanthine: step 1/1. Purine salvage pathway enzyme that catalyzes the transfer of the ribosyl-5-phosphate group from 5-phospho-alpha-D-ribose 1-diphosphate (PRPP) to the N9 position of the 6-oxopurines guanine and xanthine to form the corresponding ribonucleotides GMP (guanosine 5'-monophosphate) and XMP (xanthosine 5'-monophosphate), with the release of PPi. To a lesser extent, also acts on hypoxanthine. This chain is Xanthine-guanine phosphoribosyltransferase, found in Aliivibrio fischeri (strain ATCC 700601 / ES114) (Vibrio fischeri).